We begin with the raw amino-acid sequence, 337 residues long: Phosphatidylglycerophosphate phosphatase PTPMT1 (337 aa).

A disordered region spans residues 1–20 (MYIKELTETDEEKRERSVED). Substrate-binding residues include Tyr55 and Asp133. The Tyrosine-protein phosphatase domain maps to 73-220 (WWDRVAEFIL…VVEYYHVKVL (148 aa)). Catalysis depends on Cys164, which acts as the Phosphocysteine intermediate. A Glucan phosphatase signature motif CXAGXGR motif is present at residues 164–170 (CKAGRGR). 165-170 (KAGRGR) serves as a coordination point for substrate.

It belongs to the protein-tyrosine phosphatase family. Non-receptor class dual specificity subfamily. As to expression, expressed in stems, roots, flowers, mature seeds and leaves.

It catalyses the reaction O-phospho-L-seryl-[protein] + H2O = L-seryl-[protein] + phosphate. The enzyme catalyses O-phospho-L-threonyl-[protein] + H2O = L-threonyl-[protein] + phosphate. It carries out the reaction O-phospho-L-tyrosyl-[protein] + H2O = L-tyrosyl-[protein] + phosphate. The catalysed reaction is a 1,2-diacyl-sn-glycero-3-phospho-(1'-sn-glycero-3'-phosphate) + H2O = a 1,2-diacyl-sn-glycero-3-phospho-(1'-sn-glycerol) + phosphate. It functions in the pathway phospholipid metabolism; phosphatidylglycerol biosynthesis; phosphatidylglycerol from CDP-diacylglycerol: step 2/2. Its function is as follows. Exhibits phosphatidylglycerophosphate phosphatase activity. Involved in root growth and columella cells organization. May possess protein phosphatase activity. The polypeptide is Phosphatidylglycerophosphate phosphatase PTPMT1 (Arabidopsis thaliana (Mouse-ear cress)).